The sequence spans 714 residues: Polynucleotide 5'-hydroxyl-kinase NOL9 (714 aa).

At A2 the chain carries N-acetylalanine. Residues 31–47 carry the Nucleolar localization signal motif; that stretch reads RRGRRRFGVLTRVELRR. The disordered stretch occupies residues 80–133; sequence ARSRPAPRSPPTPSVPPAPCTASATCSLLNPRNHSTPQSRAGRPVRKVSPNVTQ. Pro residues predominate over residues 86-98; the sequence is PRSPPTPSVPPAP. Polar residues predominate over residues 107–118; the sequence is LLNPRNHSTPQS. At S128 the chain carries Phosphoserine. ATP is bound at residue 322-329; that stretch reads GACDIGKS. Residues 495-714 are interaction with LAS1L; sequence FTYEEKESSP…PRHKLRQRRK (220 aa). K500 is covalently cross-linked (Glycyl lysine isopeptide (Lys-Gly) (interchain with G-Cter in SUMO2)). S502 carries the phosphoserine modification.

This sequence belongs to the Clp1 family. NOL9/GRC3 subfamily. As to quaternary structure, interacts with PELP1, WDR18 and SENP3. Interacts with LAS1L to form an ITS2 pre-rRNA endonuclease-kinase complex.

It is found in the nucleus. Its subcellular location is the nucleolus. It carries out the reaction a 5'-end dephospho-2'-deoxyribonucleoside-DNA + ATP = a 5'-end 5'-phospho-2'-deoxyribonucleoside-DNA + ADP + H(+). The catalysed reaction is a 5'-end dephospho-ribonucleoside-RNA + ATP = a 5'-end 5'-phospho-ribonucleoside-RNA + ADP + H(+). Polynucleotide kinase that can phosphorylate the 5'-hydroxyl groups of single-stranded and double-stranded RNA and DNA substrates. Involved in rRNA processing and its kinase activity is required for the processing of the 32S precursor into 5.8S and 28S rRNAs, more specifically for the generation of the major 5.8S(S) form. Required for the efficient pre-rRNA processing of internal transcribed spacer 2 (ITS2). Associates with LAS1L to form an ITS2 pre-rRNA endonuclease-kinase complex and is responsible for the transport of this complex into the nucleolus. The protein is Polynucleotide 5'-hydroxyl-kinase NOL9 of Mus musculus (Mouse).